The chain runs to 494 residues: Probable cytochrome P450 313a4 (494 aa).

Position 440 (Cys-440) interacts with heme.

The protein belongs to the cytochrome P450 family. Requires heme as cofactor.

The protein resides in the endoplasmic reticulum membrane. It localises to the microsome membrane. May be involved in the metabolism of insect hormones and in the breakdown of synthetic insecticides. This is Probable cytochrome P450 313a4 (Cyp313a4) from Drosophila melanogaster (Fruit fly).